A 188-amino-acid polypeptide reads, in one-letter code: MKHKVGILGGTFDPPHLAHLQMAEVAKQQLNLEKVLFLPNKIPPHKHISGMASNDARVEMLRLMIEGIDYFEVDLRELKRAGKSYTYDTMRDMISEQPNTDFYFIIGGDMVEYLPKWYHIEDLVKMVTFVGVHRPHYQAEVPYDVVNIDMPETTISSTEIRNNIEHAEAFLPEKVWLYIKEHQLYGKK.

The protein belongs to the NadD family.

It catalyses the reaction nicotinate beta-D-ribonucleotide + ATP + H(+) = deamido-NAD(+) + diphosphate. The protein operates within cofactor biosynthesis; NAD(+) biosynthesis; deamido-NAD(+) from nicotinate D-ribonucleotide: step 1/1. Its function is as follows. Catalyzes the reversible adenylation of nicotinate mononucleotide (NaMN) to nicotinic acid adenine dinucleotide (NaAD). The chain is Probable nicotinate-nucleotide adenylyltransferase from Listeria welshimeri serovar 6b (strain ATCC 35897 / DSM 20650 / CCUG 15529 / CIP 8149 / NCTC 11857 / SLCC 5334 / V8).